Consider the following 473-residue polypeptide: 3-isopropylmalate dehydratase large subunit (473 aa).

3 residues coordinate [4Fe-4S] cluster: Cys-351, Cys-414, and Cys-417.

It belongs to the aconitase/IPM isomerase family. LeuC type 1 subfamily. In terms of assembly, heterodimer of LeuC and LeuD. It depends on [4Fe-4S] cluster as a cofactor.

The catalysed reaction is (2R,3S)-3-isopropylmalate = (2S)-2-isopropylmalate. Its pathway is amino-acid biosynthesis; L-leucine biosynthesis; L-leucine from 3-methyl-2-oxobutanoate: step 2/4. Catalyzes the isomerization between 2-isopropylmalate and 3-isopropylmalate, via the formation of 2-isopropylmaleate. The protein is 3-isopropylmalate dehydratase large subunit of Paracidovorax citrulli (strain AAC00-1) (Acidovorax citrulli).